Here is a 396-residue protein sequence, read N- to C-terminus: Tryptophan synthase beta chain (396 aa).

Position 88 is an N6-(pyridoxal phosphate)lysine (Lys88).

Belongs to the TrpB family. Tetramer of two alpha and two beta chains. Requires pyridoxal 5'-phosphate as cofactor.

It carries out the reaction (1S,2R)-1-C-(indol-3-yl)glycerol 3-phosphate + L-serine = D-glyceraldehyde 3-phosphate + L-tryptophan + H2O. The protein operates within amino-acid biosynthesis; L-tryptophan biosynthesis; L-tryptophan from chorismate: step 5/5. In terms of biological role, the beta subunit is responsible for the synthesis of L-tryptophan from indole and L-serine. In Shewanella sp. (strain ANA-3), this protein is Tryptophan synthase beta chain.